Here is a 98-residue protein sequence, read N- to C-terminus: Citrate lyase acyl carrier protein (98 aa).

Residue serine 14 is modified to O-(phosphoribosyl dephospho-coenzyme A)serine.

This sequence belongs to the CitD family. In terms of assembly, oligomer with a subunit composition of (alpha,beta,gamma)6.

The protein resides in the cytoplasm. Its function is as follows. Covalent carrier of the coenzyme of citrate lyase. In Albidiferax ferrireducens (strain ATCC BAA-621 / DSM 15236 / T118) (Rhodoferax ferrireducens), this protein is Citrate lyase acyl carrier protein.